A 369-amino-acid chain; its full sequence is MASVQLRNVTKAWGDVVVSKDINLDIHDGEFVVFVGPSGCGKSTLLRMIAGLETITSGDLFIGETRMNDIPPAERGVGMVFQSYALYPHLSVAENMSFGLKLAGAKKEVMNQRVNQVAEVLQLAHLLERKPKALSGGQRQRVAIGRTLVAEPRVFLLDEPLSNLDAALRVQMRIEISRLHKRLGRTMIYVTHDQVEAMTLADKIVVLDAGRVAQVGKPLELYHYPADRFVAGFIGSPKMNFLPVKVTATAIEQVQVELPNRQQIWLPVESRGVQVGANMSLGIRPEHLLPSDIADVTLEGEVQVVEQLGHETQIHIQIPAIRQNLVYRQNDVVLVEEGATFAIGLPPERCHLFREDGSACRRLHQEPGV.

Residues Val-4–Ile-234 enclose the ABC transporter domain. Gly-36–Ser-43 serves as a coordination point for ATP.

This sequence belongs to the ABC transporter superfamily. Maltooligosaccharide importer (TC 3.A.1.1.1) family. In terms of assembly, the complex is composed of two ATP-binding proteins (MalK), two transmembrane proteins (MalG and MalK) and a solute-binding protein (MalE).

Its subcellular location is the cell inner membrane. The catalysed reaction is D-maltose(out) + ATP + H2O = D-maltose(in) + ADP + phosphate + H(+). Functionally, part of the ABC transporter complex MalEFGK involved in maltose/maltodextrin import. Responsible for energy coupling to the transport system. The polypeptide is Maltose/maltodextrin import ATP-binding protein MalK (Salmonella choleraesuis (strain SC-B67)).